The primary structure comprises 433 residues: Shikimate O-hydroxycinnamoyltransferase (433 aa).

His153 acts as the Proton acceptor in catalysis. 4-coumaroyl-CoA-binding positions include 252 to 255, 284 to 290, and 370 to 373; these read SSYE, DGRSRLR, and SWVR. The Proton acceptor role is filled by Asp380.

Belongs to the plant acyltransferase family.

The catalysed reaction is shikimate + 4-coumaroyl-CoA = trans-4-coumaroylshikimate + CoA. Acyltransferase involved in the biosynthesis of lignin. Accepts caffeoyl-CoA and p-coumaroyl-CoA as substrates and transfers the acyl group on both shikimate and quinate acceptors. The protein is Shikimate O-hydroxycinnamoyltransferase (HST) of Arabidopsis thaliana (Mouse-ear cress).